The following is a 592-amino-acid chain: Keratin, type II cytoskeletal 5 (592 aa).

A compositionally biased stretch (low complexity) spans 1-18; sequence MSRQSSVSFRSGGSRSFS. The interval 1–20 is disordered; that stretch reads MSRQSSVSFRSGGSRSFSTA. Residues 1–169 form a head region; the sequence is MSRQSSVSFR…DPSIQRVRTE (169 aa). Residues serine 5, serine 8, serine 16, and serine 21 each carry the phosphoserine modification. A Phosphothreonine; by CDK1 modification is found at threonine 24. Phosphoserine occurs at positions 26, 36, 50, 64, 71, 75, and 82. Threonine 153 is modified (phosphothreonine; by CDK1). At threonine 168 the chain carries Phosphothreonine; by AURKB. Residues 170–205 form a coil 1A region; it reads EREQIKTLNNKFASFIDKVRFLEQQNKVLDTKWTLL. Residues 170-483 enclose the IF rod domain; sequence EREQIKTLNN…KLLEGEECRL (314 aa). Residues 206–224 form a linker 1 region; it reads QEQGTKTVRQNLEPLFEQY. A coil 1B region spans residues 225 to 317; that stretch reads INNLRRQLDS…FFDAELSQMQ (93 aa). Positions 318-340 are linker 12; sequence THVSDTSVVLSMDNNRNLDLDSI. Residues 341-479 form a coil 2 region; it reads IAEVKAQYEE…ATYRKLLEGE (139 aa). The segment at 480–592 is tail; that stretch reads ECRLSGEGVG…TSSSRKSFKS (113 aa). Residues 568 to 592 form a disordered region; it reads GSGGGSSSSVKFVSTTSSSRKSFKS. The segment covering 574–592 has biased composition (low complexity); that stretch reads SSSVKFVSTTSSSRKSFKS.

Belongs to the intermediate filament family. In terms of assembly, heterodimer of a type I and a type II keratin. Heterodimer with type I keratin KRT25 leading to the formation of keratin intermediate filament (KIF) network. Forms a heterodimer (via 2B domains) with KRT14 (via 2B domains). Interacts with TCHP. Interacts with EPPK1. Interacts with AMELX. Interacts with PKP1 (via N-terminus) and PKP2. Post-translationally, phosphorylated by CDK1, AURKB and Rho-kinase, phosphorylation is regulated by the cell cycle. Thr-24 phosphorylation, mediated by CDK1, peaks during prometaphase or metaphase cells with phosphorylated filamentous structures evident throughout the cytoplasm during early mitosis. CDK1 phosphorylates Thr-24 in mitotic cells at the site of injury. In terms of processing, O-glycosylated.

The protein resides in the cytoplasm. Required for the formation of keratin intermediate filaments in the basal epidermis and maintenance of the skin barrier in response to mechanical stress. Regulates the recruitment of Langerhans cells to the epidermis, potentially by modulation of the abundance of macrophage chemotactic cytokines, macrophage inflammatory cytokines and CTNND1 localization in keratinocytes. The sequence is that of Keratin, type II cytoskeletal 5 (KRT5) from Pan troglodytes (Chimpanzee).